The chain runs to 450 residues: Signal recognition particle 54 kDa protein (450 aa).

GTP-binding positions include 107–114 (GIQGSGKT), 188–192 (DTAGR), and 247–250 (TKLD).

It belongs to the GTP-binding SRP family. SRP54 subfamily. As to quaternary structure, part of the signal recognition particle protein translocation system, which is composed of SRP and FtsY. Archaeal SRP consists of a 7S RNA molecule of 300 nucleotides and two protein subunits: SRP54 and SRP19.

The protein localises to the cytoplasm. The catalysed reaction is GTP + H2O = GDP + phosphate + H(+). Involved in targeting and insertion of nascent membrane proteins into the cytoplasmic membrane. Binds to the hydrophobic signal sequence of the ribosome-nascent chain (RNC) as it emerges from the ribosomes. The SRP-RNC complex is then targeted to the cytoplasmic membrane where it interacts with the SRP receptor FtsY. The protein is Signal recognition particle 54 kDa protein of Methanococcus maripaludis (strain C5 / ATCC BAA-1333).